We begin with the raw amino-acid sequence, 201 residues long: Peroxiredoxin 2 (201 aa).

One can recognise a Thioredoxin domain in the interval 3 to 156; that stretch reads VYLGKRAPDF…ILRSVKALQA (154 aa). The Cysteine sulfenic acid (-SOH) intermediate role is filled by Cys44. Residue Arg119 coordinates substrate.

Belongs to the peroxiredoxin family. Prx6 subfamily. Homodecamer. Pentamer of dimers that assemble into a ring structure.

Its subcellular location is the cytoplasm. It catalyses the reaction a hydroperoxide + [thioredoxin]-dithiol = an alcohol + [thioredoxin]-disulfide + H2O. Thiol-specific peroxidase that catalyzes the reduction of hydrogen peroxide and organic hydroperoxides to water and alcohols, respectively. Plays a role in cell protection against oxidative stress by detoxifying peroxides. In Picrophilus torridus (strain ATCC 700027 / DSM 9790 / JCM 10055 / NBRC 100828 / KAW 2/3), this protein is Peroxiredoxin 2.